Reading from the N-terminus, the 618-residue chain is Chaperone protein HscA homolog (618 aa).

The protein belongs to the heat shock protein 70 family.

In terms of biological role, chaperone involved in the maturation of iron-sulfur cluster-containing proteins. Has a low intrinsic ATPase activity which is markedly stimulated by HscB. The sequence is that of Chaperone protein HscA homolog from Methylibium petroleiphilum (strain ATCC BAA-1232 / LMG 22953 / PM1).